A 176-amino-acid polypeptide reads, in one-letter code: Bifunctional protein PyrR (176 aa).

The PRPP-binding motif lies at 93 to 105 (VILVDDVLYTGRT).

The protein belongs to the purine/pyrimidine phosphoribosyltransferase family. PyrR subfamily. Homodimer and homohexamer; in equilibrium.

The enzyme catalyses UMP + diphosphate = 5-phospho-alpha-D-ribose 1-diphosphate + uracil. Its function is as follows. Regulates transcriptional attenuation of the pyrimidine nucleotide (pyr) operon by binding in a uridine-dependent manner to specific sites on pyr mRNA. This disrupts an antiterminator hairpin in the RNA and favors formation of a downstream transcription terminator, leading to a reduced expression of downstream genes. Also displays a weak uracil phosphoribosyltransferase activity which is not physiologically significant. The polypeptide is Bifunctional protein PyrR (Streptococcus mutans serotype c (strain ATCC 700610 / UA159)).